The sequence spans 428 residues: Adenylosuccinate synthetase (428 aa).

Residues 12 to 18 (GDEGKGK) and 40 to 42 (GHT) contribute to the GTP site. The active-site Proton acceptor is the aspartate 13. The Mg(2+) site is built by aspartate 13 and glycine 40. IMP is bound by residues 13–16 (DEGK), 38–41 (NAGH), threonine 130, arginine 144, glutamine 225, threonine 240, and arginine 304. The Proton donor role is filled by histidine 41. Substrate is bound at residue 300–306 (VTTGRSR). Residues arginine 306, 332–334 (KID), and 414–416 (GVG) each bind GTP.

It belongs to the adenylosuccinate synthetase family. As to quaternary structure, homodimer. The cofactor is Mg(2+).

The protein localises to the cytoplasm. The enzyme catalyses IMP + L-aspartate + GTP = N(6)-(1,2-dicarboxyethyl)-AMP + GDP + phosphate + 2 H(+). Its pathway is purine metabolism; AMP biosynthesis via de novo pathway; AMP from IMP: step 1/2. Plays an important role in the de novo pathway of purine nucleotide biosynthesis. Catalyzes the first committed step in the biosynthesis of AMP from IMP. The chain is Adenylosuccinate synthetase from Clostridium botulinum (strain Alaska E43 / Type E3).